A 246-amino-acid polypeptide reads, in one-letter code: tRNA (guanine-N(7)-)-methyltransferase (246 aa).

S-adenosyl-L-methionine is bound by residues glutamate 77, glutamate 102, aspartate 129, and aspartate 152. Aspartate 152 is a catalytic residue. Residues lysine 156, aspartate 188, and 225 to 228 each bind substrate; that span reads TKFE.

The protein belongs to the class I-like SAM-binding methyltransferase superfamily. TrmB family.

It carries out the reaction guanosine(46) in tRNA + S-adenosyl-L-methionine = N(7)-methylguanosine(46) in tRNA + S-adenosyl-L-homocysteine. It functions in the pathway tRNA modification; N(7)-methylguanine-tRNA biosynthesis. In terms of biological role, catalyzes the formation of N(7)-methylguanine at position 46 (m7G46) in tRNA. The sequence is that of tRNA (guanine-N(7)-)-methyltransferase from Haemophilus influenzae (strain PittEE).